We begin with the raw amino-acid sequence, 411 residues long: Dual-specificity RNA methyltransferase RlmN (411 aa).

Glu-125 serves as the catalytic Proton acceptor. A Radical SAM core domain is found at 131–380 (EEGRGTLCIS…IRTPRGRDIL (250 aa)). A disulfide bridge connects residues Cys-138 and Cys-383. The [4Fe-4S] cluster site is built by Cys-145, Cys-149, and Cys-152. S-adenosyl-L-methionine is bound by residues 209–210 (GE), Ser-241, 263–265 (SLH), and Asn-340. Cys-383 (S-methylcysteine intermediate) is an active-site residue.

Belongs to the radical SAM superfamily. RlmN family. The cofactor is [4Fe-4S] cluster.

Its subcellular location is the cytoplasm. The enzyme catalyses adenosine(2503) in 23S rRNA + 2 reduced [2Fe-2S]-[ferredoxin] + 2 S-adenosyl-L-methionine = 2-methyladenosine(2503) in 23S rRNA + 5'-deoxyadenosine + L-methionine + 2 oxidized [2Fe-2S]-[ferredoxin] + S-adenosyl-L-homocysteine. It catalyses the reaction adenosine(37) in tRNA + 2 reduced [2Fe-2S]-[ferredoxin] + 2 S-adenosyl-L-methionine = 2-methyladenosine(37) in tRNA + 5'-deoxyadenosine + L-methionine + 2 oxidized [2Fe-2S]-[ferredoxin] + S-adenosyl-L-homocysteine. Functionally, specifically methylates position 2 of adenine 2503 in 23S rRNA and position 2 of adenine 37 in tRNAs. m2A2503 modification seems to play a crucial role in the proofreading step occurring at the peptidyl transferase center and thus would serve to optimize ribosomal fidelity. This Brucella abortus (strain S19) protein is Dual-specificity RNA methyltransferase RlmN.